We begin with the raw amino-acid sequence, 264 residues long: Thiazole synthase (264 aa).

Residue Lys104 is the Schiff-base intermediate with DXP of the active site. 1-deoxy-D-xylulose 5-phosphate is bound by residues Gly165, 191–192 (AG), and 213–214 (NT).

Belongs to the ThiG family. As to quaternary structure, homotetramer. Forms heterodimers with either ThiH or ThiS.

The protein localises to the cytoplasm. The enzyme catalyses [ThiS sulfur-carrier protein]-C-terminal-Gly-aminoethanethioate + 2-iminoacetate + 1-deoxy-D-xylulose 5-phosphate = [ThiS sulfur-carrier protein]-C-terminal Gly-Gly + 2-[(2R,5Z)-2-carboxy-4-methylthiazol-5(2H)-ylidene]ethyl phosphate + 2 H2O + H(+). The protein operates within cofactor biosynthesis; thiamine diphosphate biosynthesis. Catalyzes the rearrangement of 1-deoxy-D-xylulose 5-phosphate (DXP) to produce the thiazole phosphate moiety of thiamine. Sulfur is provided by the thiocarboxylate moiety of the carrier protein ThiS. In vitro, sulfur can be provided by H(2)S. In Oleidesulfovibrio alaskensis (strain ATCC BAA-1058 / DSM 17464 / G20) (Desulfovibrio alaskensis), this protein is Thiazole synthase.